The chain runs to 360 residues: Phosphoserine aminotransferase (360 aa).

Arginine 41 is a binding site for L-glutamate. Pyridoxal 5'-phosphate is bound by residues tryptophan 101, threonine 152, aspartate 172, and glutamine 195. Lysine 196 carries the N6-(pyridoxal phosphate)lysine modification. 237–238 serves as a coordination point for pyridoxal 5'-phosphate; sequence NT.

It belongs to the class-V pyridoxal-phosphate-dependent aminotransferase family. SerC subfamily. In terms of assembly, homodimer. Requires pyridoxal 5'-phosphate as cofactor.

Its subcellular location is the cytoplasm. The enzyme catalyses O-phospho-L-serine + 2-oxoglutarate = 3-phosphooxypyruvate + L-glutamate. It catalyses the reaction 4-(phosphooxy)-L-threonine + 2-oxoglutarate = (R)-3-hydroxy-2-oxo-4-phosphooxybutanoate + L-glutamate. It functions in the pathway amino-acid biosynthesis; L-serine biosynthesis; L-serine from 3-phospho-D-glycerate: step 2/3. It participates in cofactor biosynthesis; pyridoxine 5'-phosphate biosynthesis; pyridoxine 5'-phosphate from D-erythrose 4-phosphate: step 3/5. In terms of biological role, catalyzes the reversible conversion of 3-phosphohydroxypyruvate to phosphoserine and of 3-hydroxy-2-oxo-4-phosphonooxybutanoate to phosphohydroxythreonine. This Burkholderia ambifaria (strain ATCC BAA-244 / DSM 16087 / CCUG 44356 / LMG 19182 / AMMD) (Burkholderia cepacia (strain AMMD)) protein is Phosphoserine aminotransferase.